Reading from the N-terminus, the 686-residue chain is MKALLFLLTLFLILPNPISAIDFIFNGFNDSSSNVSLFGIATIESKILTLTNQTSFATGRALYNRTIRTKDPITSSVLPFSTSFIFTMAPYKNTLPGHGIVFLFAPSTGINGSSSAQHLGLFNLTNNGNPSNHIFGVEFDVFANQEFSDIDANHVGIDVNSLHSVYSNTSGYWSDDGVVFKPLKLNDGRNYQVWIDYRDFVVNVTMQVAGKIRPKIPLLSTSLNLSDVVEDEMFVGFTAATGRLVQSHKILAWSFSNSNFSLSNSLITTGLPSFVLPKDSIVKAKWFVFVLVLICFLVVALVGLVLFAVVRKRLERARKRALMEDWEMEYWPHRIPYEEIESGTKGFDEKNVIGIGGNGKVYKGLLQGGVVEVAVKRISQESSDGMREFVAEISSLGRLKHRNLVSLRGWCKKEVGSFMLVYDYMENGSLDRWIFENDEKITTLSCEERIRILKGVASGILYLHEGWESKVLHRDIKASNVLLDRDMIPRLSDFGLARVHGHEQPVRTTRVVGTAGYLAPEVVKTGRASTQTDVFAYGILVLEVMCGRRPIEEGKKPLMDWVWGLMERGEILNGLDPQMMMTQGVTEVIDEAERVLQLGLLCAHPDPAKRPSMRQVVQVFEGDKAEIFEAESSEDVESWMLMKMGSRGSSREFWYGSSSHPTIEQIRLQSLSVSLSSWNSSILEGR.

A signal peptide spans 1–20 (MKALLFLLTLFLILPNPISA). Residues 21–256 (IDFIFNGFND…SHKILAWSFS (236 aa)) are legume-lectin like. At 21 to 286 (IDFIFNGFND…PKDSIVKAKW (266 aa)) the chain is on the extracellular side. N-linked (GlcNAc...) asparagine glycans are attached at residues Asn29, Asn34, Asn52, Asn64, Asn111, Asn123, Asn168, Asn203, Asn224, and Asn259. The chain crosses the membrane as a helical span at residues 287 to 307 (FVFVLVLICFLVVALVGLVLF). Residues 308 to 686 (AVVRKRLERA…SWNSSILEGR (379 aa)) are Cytoplasmic-facing. The 282-residue stretch at 347–628 (FDEKNVIGIG…VFEGDKAEIF (282 aa)) folds into the Protein kinase domain. ATP-binding positions include 353–361 (IGIGGNGKV) and Lys376. Residue Asp475 is the Proton acceptor of the active site.

This sequence in the C-terminal section; belongs to the protein kinase superfamily. Ser/Thr protein kinase family. The protein in the N-terminal section; belongs to the leguminous lectin family.

The protein localises to the cell membrane. The catalysed reaction is L-seryl-[protein] + ATP = O-phospho-L-seryl-[protein] + ADP + H(+). It catalyses the reaction L-threonyl-[protein] + ATP = O-phospho-L-threonyl-[protein] + ADP + H(+). The sequence is that of L-type lectin-domain containing receptor kinase VII.1 (LECRK71) from Arabidopsis thaliana (Mouse-ear cress).